We begin with the raw amino-acid sequence, 384 residues long: Heparin lyase I (384 aa).

Positions Met1 to Ala21 are cleaved as a signal peptide. Gln22 bears the Blocked amino end (Gln) mark. O-linked (Man...) serine glycosylation occurs at Ser39.

In terms of assembly, monomer. The N-terminus is blocked.

It is found in the periplasm. The catalysed reaction is Eliminative cleavage of polysaccharides containing (1-&gt;4)-linked D-glucuronate or L-iduronate residues and (1-&gt;4)-alpha-linked 2-sulfoamino-2-deoxy-6-sulfo-D-glucose residues to give oligosaccharides with terminal 4-deoxy-alpha-D-gluc-4-enuronosyl groups at their non-reducing ends.. In terms of biological role, degrades heparin and heparan sulfate. Also implicated in the release of heparin-bound growth factors from the extracellular matrix. This Pedobacter heparinus (Flavobacterium heparinum) protein is Heparin lyase I.